The sequence spans 251 residues: L-xylulose reductase (251 aa).

Residue 13–42 (LVTGASQGIGKEICLSLAKAGAQVIAFARN) coordinates NADP(+). Ser-143 lines the substrate pocket. Tyr-156 (proton acceptor) is an active-site residue. Position 160 (Lys-160) interacts with NADP(+).

It belongs to the short-chain dehydrogenases/reductases (SDR) family. As to quaternary structure, homotetramer. In terms of tissue distribution, expressed in intestine, gonad and spermatids (at protein level). Expressed in intestine, uterine seam, gonadal sheath cells, spermathecal-uterus valve and spermatids.

The protein localises to the cell membrane. The enzyme catalyses xylitol + NADP(+) = L-xylulose + NADPH + H(+). With respect to regulation, strongly inhibited by 10% dimethyl sulfoxide. Its function is as follows. Catalyzes the NADPH-dependent reduction of L-xylulose, D-xylulose, L-(+) erythrulose, D-erythrose, D-threose, L-ribulose, 1,4-dibromo-2,3-butanedione and 2,3-heptanedione. Also active against isatin, 9,10-phenanthrenequinone, menadione, 2,3-hexaenadione and 3,4-hexahenadione. No activity observed when tested using NADH rather than NADPH. This chain is L-xylulose reductase, found in Caenorhabditis elegans.